We begin with the raw amino-acid sequence, 231 residues long: Cytochrome c oxidase subunit 2 (231 aa).

The Mitochondrial intermembrane portion of the chain corresponds to 1–14; it reads MAHPSQLGLQDAAS. The chain crosses the membrane as a helical span at residues 15–45; sequence PVMEELLHFHDHALMIVFLISTLVFYIILAM. Topologically, residues 46 to 59 are mitochondrial matrix; sequence MTTKMTDKYILDAQ. Residues 60–87 traverse the membrane as a helical segment; it reads EIEIVWTLLPAIVLILVALPSLRILYLI. Residues 88-231 lie on the Mitochondrial intermembrane side of the membrane; sequence DEVENPHLTI…WSSSMLEEAX (144 aa). The Cu cation site is built by histidine 161, cysteine 196, glutamate 198, cysteine 200, histidine 204, and methionine 207. Glutamate 198 provides a ligand contact to Mg(2+).

It belongs to the cytochrome c oxidase subunit 2 family. In terms of assembly, component of the cytochrome c oxidase (complex IV, CIV), a multisubunit enzyme composed of 14 subunits. The complex is composed of a catalytic core of 3 subunits MT-CO1, MT-CO2 and MT-CO3, encoded in the mitochondrial DNA, and 11 supernumerary subunits COX4I, COX5A, COX5B, COX6A, COX6B, COX6C, COX7A, COX7B, COX7C, COX8 and NDUFA4, which are encoded in the nuclear genome. The complex exists as a monomer or a dimer and forms supercomplexes (SCs) in the inner mitochondrial membrane with NADH-ubiquinone oxidoreductase (complex I, CI) and ubiquinol-cytochrome c oxidoreductase (cytochrome b-c1 complex, complex III, CIII), resulting in different assemblies (supercomplex SCI(1)III(2)IV(1) and megacomplex MCI(2)III(2)IV(2)). Found in a complex with TMEM177, COA6, COX18, COX20, SCO1 and SCO2. Interacts with TMEM177 in a COX20-dependent manner. Interacts with COX20. Interacts with COX16. Requires Cu cation as cofactor.

The protein localises to the mitochondrion inner membrane. It catalyses the reaction 4 Fe(II)-[cytochrome c] + O2 + 8 H(+)(in) = 4 Fe(III)-[cytochrome c] + 2 H2O + 4 H(+)(out). Component of the cytochrome c oxidase, the last enzyme in the mitochondrial electron transport chain which drives oxidative phosphorylation. The respiratory chain contains 3 multisubunit complexes succinate dehydrogenase (complex II, CII), ubiquinol-cytochrome c oxidoreductase (cytochrome b-c1 complex, complex III, CIII) and cytochrome c oxidase (complex IV, CIV), that cooperate to transfer electrons derived from NADH and succinate to molecular oxygen, creating an electrochemical gradient over the inner membrane that drives transmembrane transport and the ATP synthase. Cytochrome c oxidase is the component of the respiratory chain that catalyzes the reduction of oxygen to water. Electrons originating from reduced cytochrome c in the intermembrane space (IMS) are transferred via the dinuclear copper A center (CU(A)) of subunit 2 and heme A of subunit 1 to the active site in subunit 1, a binuclear center (BNC) formed by heme A3 and copper B (CU(B)). The BNC reduces molecular oxygen to 2 water molecules using 4 electrons from cytochrome c in the IMS and 4 protons from the mitochondrial matrix. The protein is Cytochrome c oxidase subunit 2 (MT-CO2) of Latimeria chalumnae (Coelacanth).